Reading from the N-terminus, the 387-residue chain is Formate-dependent phosphoribosylglycinamide formyltransferase (387 aa).

Residues 15 to 16 (EL) and Glu75 each bind N(1)-(5-phospho-beta-D-ribosyl)glycinamide. Residues Arg106, Lys147, 152–157 (SSGKGQ), 187–190 (EEFI), and Glu195 contribute to the ATP site. In terms of domain architecture, ATP-grasp spans 111–301 (DLASNELNIR…EFELHLRAVL (191 aa)). Mg(2+) contacts are provided by Glu260 and Glu272. N(1)-(5-phospho-beta-D-ribosyl)glycinamide is bound by residues Asp279, Lys349, and 356–357 (RR).

The protein belongs to the PurK/PurT family. In terms of assembly, homodimer.

It carries out the reaction N(1)-(5-phospho-beta-D-ribosyl)glycinamide + formate + ATP = N(2)-formyl-N(1)-(5-phospho-beta-D-ribosyl)glycinamide + ADP + phosphate + H(+). It participates in purine metabolism; IMP biosynthesis via de novo pathway; N(2)-formyl-N(1)-(5-phospho-D-ribosyl)glycinamide from N(1)-(5-phospho-D-ribosyl)glycinamide (formate route): step 1/1. In terms of biological role, involved in the de novo purine biosynthesis. Catalyzes the transfer of formate to 5-phospho-ribosyl-glycinamide (GAR), producing 5-phospho-ribosyl-N-formylglycinamide (FGAR). Formate is provided by PurU via hydrolysis of 10-formyl-tetrahydrofolate. The chain is Formate-dependent phosphoribosylglycinamide formyltransferase from Prochlorococcus marinus (strain NATL2A).